The following is a 691-amino-acid chain: T-box transcription factor TBX2-B (691 aa).

A DNA-binding region (T-box) is located at residues 104-277 (LWDQFHKIGT…HNPFAKGFRD (174 aa)). Disordered stretches follow at residues 301-440 (CKAD…SLSK) and 612-691 (NLLT…ESPK). Low complexity predominate over residues 325 to 335 (HSPLSAAPSPL). Composition is skewed to basic and acidic residues over residues 340 to 361 (TNRE…EVRS), 378 to 402 (RLED…RKDG), and 415 to 433 (SLEK…KSDP). Residues 624 to 639 (PGSESSKPGSSRESSP) are compositionally biased toward low complexity. Residues 659-684 (SMKDSINELQRIQRLVSGLERQREVS) adopt a coiled-coil conformation. Over residues 678–691 (ERQREVSPGRESPK) the composition is skewed to basic and acidic residues.

Binds DNA as a monomer.

The protein localises to the nucleus. Functionally, transcription factor which acts as a transcriptional repressor. May also function as a transcriptional activator. Binds to the palindromic T site 5'-TTCACACCTAGGTGTGAA-3' DNA sequence, or a half-site, which are present in the regulatory region of several genes. This chain is T-box transcription factor TBX2-B (tbx2-b), found in Xenopus laevis (African clawed frog).